The following is a 492-amino-acid chain: Trigger factor (492 aa).

In terms of domain architecture, PPIase FKBP-type spans 164–249; that stretch reads GDLVVVDFVG…VSDVRVPRKA (86 aa). Residues 440 to 492 are disordered; the sequence is EAEEDSIGKHDHDHDHKEKASDKPKAKKAAAPKKKAAPKKKAAPKAEKKSSDE. Positions 445–463 are enriched in basic and acidic residues; it reads SIGKHDHDHDHKEKASDKP. The segment covering 464–482 has biased composition (basic residues); sequence KAKKAAAPKKKAAPKKKAA. A compositionally biased stretch (basic and acidic residues) spans 483–492; the sequence is PKAEKKSSDE.

This sequence belongs to the FKBP-type PPIase family. Tig subfamily.

The protein resides in the cytoplasm. It carries out the reaction [protein]-peptidylproline (omega=180) = [protein]-peptidylproline (omega=0). Involved in protein export. Acts as a chaperone by maintaining the newly synthesized protein in an open conformation. Functions as a peptidyl-prolyl cis-trans isomerase. The sequence is that of Trigger factor from Zymomonas mobilis subsp. mobilis (strain ATCC 31821 / ZM4 / CP4).